The following is a 469-amino-acid chain: UDP-N-acetylmuramoylalanine--D-glutamate ligase (469 aa).

121-127 is a binding site for ATP; sequence GTNGKST.

The protein belongs to the MurCDEF family.

Its subcellular location is the cytoplasm. It carries out the reaction UDP-N-acetyl-alpha-D-muramoyl-L-alanine + D-glutamate + ATP = UDP-N-acetyl-alpha-D-muramoyl-L-alanyl-D-glutamate + ADP + phosphate + H(+). Its pathway is cell wall biogenesis; peptidoglycan biosynthesis. In terms of biological role, cell wall formation. Catalyzes the addition of glutamate to the nucleotide precursor UDP-N-acetylmuramoyl-L-alanine (UMA). In Agrobacterium fabrum (strain C58 / ATCC 33970) (Agrobacterium tumefaciens (strain C58)), this protein is UDP-N-acetylmuramoylalanine--D-glutamate ligase.